A 153-amino-acid chain; its full sequence is Lipoprotein signal peptidase (153 aa).

The next 3 helical transmembrane spans lie at 6–26 (IVAVIVLLLIGLDQLVKSYIV), 60–80 (QQLLFAVITLVVVIGAIWYLH), and 85–105 (DSFWMVLGLTLIIAGGLGNFI). Catalysis depends on residues Asp115 and Asp131. Residues 124 to 144 (FAIFNVADSYLTVGVIILLIA) traverse the membrane as a helical segment.

Belongs to the peptidase A8 family.

It localises to the cell membrane. The catalysed reaction is Release of signal peptides from bacterial membrane prolipoproteins. Hydrolyzes -Xaa-Yaa-Zaa-|-(S,diacylglyceryl)Cys-, in which Xaa is hydrophobic (preferably Leu), and Yaa (Ala or Ser) and Zaa (Gly or Ala) have small, neutral side chains.. Its pathway is protein modification; lipoprotein biosynthesis (signal peptide cleavage). Its function is as follows. This protein specifically catalyzes the removal of signal peptides from prolipoproteins. This chain is Lipoprotein signal peptidase, found in Streptococcus pneumoniae (strain ATCC BAA-255 / R6).